Consider the following 119-residue polypeptide: Large ribosomal subunit protein bL17 (119 aa).

Belongs to the bacterial ribosomal protein bL17 family. In terms of assembly, part of the 50S ribosomal subunit. Contacts protein L32.

The polypeptide is Large ribosomal subunit protein bL17 (Acholeplasma laidlawii (strain PG-8A)).